A 494-amino-acid polypeptide reads, in one-letter code: UDP-N-acetylmuramoyl-L-alanyl-D-glutamate--L-lysine ligase (494 aa).

Position 30 (Ser30) interacts with UDP-N-acetyl-alpha-D-muramoyl-L-alanyl-D-glutamate. 110 to 116 (GTNGKTS) is an ATP binding site. UDP-N-acetyl-alpha-D-muramoyl-L-alanyl-D-glutamate-binding positions include 152 to 153 (TT), Ser179, and Arg187. The residue at position 219 (Lys219) is an N6-carboxylysine. Positions 406–409 (DNPA) match the L-lysine recognition motif motif.

The protein belongs to the MurCDEF family. MurE subfamily. In terms of processing, carboxylation is probably crucial for Mg(2+) binding and, consequently, for the gamma-phosphate positioning of ATP.

Its subcellular location is the cytoplasm. It catalyses the reaction UDP-N-acetyl-alpha-D-muramoyl-L-alanyl-D-glutamate + L-lysine + ATP = UDP-N-acetyl-alpha-D-muramoyl-L-alanyl-gamma-D-glutamyl-L-lysine + ADP + phosphate + H(+). The protein operates within cell wall biogenesis; peptidoglycan biosynthesis. Catalyzes the addition of L-lysine to the nucleotide precursor UDP-N-acetylmuramoyl-L-alanyl-D-glutamate (UMAG) in the biosynthesis of bacterial cell-wall peptidoglycan. This is UDP-N-acetylmuramoyl-L-alanyl-D-glutamate--L-lysine ligase from Staphylococcus epidermidis (strain ATCC 35984 / DSM 28319 / BCRC 17069 / CCUG 31568 / BM 3577 / RP62A).